The primary structure comprises 287 residues: Bifunctional protein FolD (287 aa).

Residues 166 to 168 and Ile-232 contribute to the NADP(+) site; that span reads GAS.

It belongs to the tetrahydrofolate dehydrogenase/cyclohydrolase family. In terms of assembly, homodimer.

The enzyme catalyses (6R)-5,10-methylene-5,6,7,8-tetrahydrofolate + NADP(+) = (6R)-5,10-methenyltetrahydrofolate + NADPH. It carries out the reaction (6R)-5,10-methenyltetrahydrofolate + H2O = (6R)-10-formyltetrahydrofolate + H(+). It functions in the pathway one-carbon metabolism; tetrahydrofolate interconversion. Its function is as follows. Catalyzes the oxidation of 5,10-methylenetetrahydrofolate to 5,10-methenyltetrahydrofolate and then the hydrolysis of 5,10-methenyltetrahydrofolate to 10-formyltetrahydrofolate. This chain is Bifunctional protein FolD, found in Pectobacterium carotovorum subsp. carotovorum (strain PC1).